Consider the following 607-residue polypeptide: Polypeptide N-acetylgalactosaminyltransferase 18 (607 aa).

Over 1 to 12 the chain is Cytoplasmic; the sequence is MVCTRKTKTLVS. Residues 13–35 traverse the membrane as a helical; Signal-anchor for type II membrane protein segment; it reads TCVILSGMTNIICLLYVGWVTNY. Residues 36 to 607 lie on the Lumenal side of the membrane; the sequence is IASVYVRGQE…ITNVLRSLAS (572 aa). Disulfide bonds link Cys-144/Cys-377, Cys-368/Cys-447, Cys-482/Cys-498, Cys-530/Cys-543, and Cys-571/Cys-591. Asn-146 is a glycosylation site (N-linked (GlcNAc...) asparagine). The interval 153–267 is catalytic subdomain A; the sequence is LPEVSIVFIF…VGWAEPVLTR (115 aa). Asp-194 provides a ligand contact to substrate. N-linked (GlcNAc...) asparagine glycosylation is present at Asn-195. Positions 251 and 253 each coordinate Mn(2+). Asn-320 carries N-linked (GlcNAc...) asparagine glycosylation. The catalytic subdomain B stretch occupies residues 324–385; it reads PIRSPALIGC…PCSRIAHIER (62 aa). His-382 contacts Mn(2+). Arg-385 and Tyr-390 together coordinate substrate. The Ricin B-type lectin domain maps to 469 to 599; that stretch reads AYGVLQNSLK…KCSGQHWSIT (131 aa).

This sequence belongs to the glycosyltransferase 2 family. GalNAc-T subfamily. It depends on Mn(2+) as a cofactor.

It is found in the golgi apparatus membrane. It catalyses the reaction L-seryl-[protein] + UDP-N-acetyl-alpha-D-galactosamine = a 3-O-[N-acetyl-alpha-D-galactosaminyl]-L-seryl-[protein] + UDP + H(+). It carries out the reaction L-threonyl-[protein] + UDP-N-acetyl-alpha-D-galactosamine = a 3-O-[N-acetyl-alpha-D-galactosaminyl]-L-threonyl-[protein] + UDP + H(+). The protein operates within protein modification; protein glycosylation. Functionally, catalyzes the initial reaction in O-linked oligosaccharide biosynthesis, the transfer of an N-acetyl-D-galactosamine (GalNAc) residue from UDP-GalNAc to a serine or threonine residue on the protein receptor. This is Polypeptide N-acetylgalactosaminyltransferase 18 (GALNT18) from Homo sapiens (Human).